The chain runs to 103 residues: Pyrimidine/purine nucleoside phosphorylase (103 aa).

It belongs to the nucleoside phosphorylase PpnP family.

The enzyme catalyses a purine D-ribonucleoside + phosphate = a purine nucleobase + alpha-D-ribose 1-phosphate. It catalyses the reaction adenosine + phosphate = alpha-D-ribose 1-phosphate + adenine. The catalysed reaction is cytidine + phosphate = cytosine + alpha-D-ribose 1-phosphate. It carries out the reaction guanosine + phosphate = alpha-D-ribose 1-phosphate + guanine. The enzyme catalyses inosine + phosphate = alpha-D-ribose 1-phosphate + hypoxanthine. It catalyses the reaction thymidine + phosphate = 2-deoxy-alpha-D-ribose 1-phosphate + thymine. The catalysed reaction is uridine + phosphate = alpha-D-ribose 1-phosphate + uracil. It carries out the reaction xanthosine + phosphate = alpha-D-ribose 1-phosphate + xanthine. Catalyzes the phosphorolysis of diverse nucleosides, yielding D-ribose 1-phosphate and the respective free bases. Can use uridine, adenosine, guanosine, cytidine, thymidine, inosine and xanthosine as substrates. Also catalyzes the reverse reactions. The sequence is that of Pyrimidine/purine nucleoside phosphorylase from Shewanella denitrificans (strain OS217 / ATCC BAA-1090 / DSM 15013).